The chain runs to 218 residues: Hypoxanthine-guanine phosphoribosyltransferase (218 aa).

Ala2 is modified (N-acetylalanine). Lys69 is a GMP binding site. An N6-acetyllysine modification is found at Lys103. Residue Lys115 forms a Glycyl lysine isopeptide (Lys-Gly) (interchain with G-Cter in SUMO1); alternate linkage. Lys115 is covalently cross-linked (Glycyl lysine isopeptide (Lys-Gly) (interchain with G-Cter in SUMO2); alternate). Residues 134–142 (EDIIDTGKT), Lys166, 186–188 (KFV), and Asp194 each bind GMP. The active-site Proton acceptor is the Asp138. The residue at position 142 (Thr142) is a Phosphothreonine. Residue Asp194 participates in Mg(2+) binding.

This sequence belongs to the purine/pyrimidine phosphoribosyltransferase family. In terms of assembly, homotetramer. Mg(2+) serves as cofactor.

It is found in the cytoplasm. It catalyses the reaction IMP + diphosphate = hypoxanthine + 5-phospho-alpha-D-ribose 1-diphosphate. The catalysed reaction is GMP + diphosphate = guanine + 5-phospho-alpha-D-ribose 1-diphosphate. The protein operates within purine metabolism; IMP biosynthesis via salvage pathway; IMP from hypoxanthine: step 1/1. Its function is as follows. Converts guanine to guanosine monophosphate, and hypoxanthine to inosine monophosphate. Transfers the 5-phosphoribosyl group from 5-phosphoribosylpyrophosphate onto the purine. Plays a central role in the generation of purine nucleotides through the purine salvage pathway. The polypeptide is Hypoxanthine-guanine phosphoribosyltransferase (HPRT1) (Bos taurus (Bovine)).